We begin with the raw amino-acid sequence, 331 residues long: KNNVVIVATGGTIAGAGASSTNSATYSAAKVPVDALIKAVPQVNDLANITGIQALQVASESITDKELLSLARQVNDLVKKPSVNGVVITHGTDTMEETAFFLNLVVHTDKPIVLVGSMRPSTALSADGPLNLYSAVALASSNEAKNKGVMVLMNDSIFAARDVTKGINIHTHAFVSQWGALGTLVEGKPYWFRSSVKKHTNNSEFNIEKIQGDALPGVQIVYGSDNMMPDAYQAFAKAGVKAIIHAGTGNGSMANYLVPEVRKLHDEQGLQIVRSSRVAQGFVLRNAEQPDDKYGWIAAHDLNPQKARLLMALALTKTNDAKEIQNMFWNY.

Residues 2–331 (NNVVIVATGG…KEIQNMFWNY (330 aa)) enclose the Asparaginase/glutaminase domain. Threonine 12 acts as the Acyl-ester intermediate in catalysis. Substrate-binding positions include serine 59 and 92-93 (TD).

It belongs to the asparaginase 1 family. In terms of assembly, homotetramer.

The protein localises to the periplasm. The catalysed reaction is L-glutamine + H2O = L-glutamate + NH4(+). The enzyme catalyses L-asparagine + H2O = L-aspartate + NH4(+). In Acinetobacter glutaminasificans, this protein is Glutaminase-asparaginase (ansB).